A 549-amino-acid chain; its full sequence is Hydroxylamine reductase (549 aa).

Residues C5, C8, C17, and C23 each coordinate [4Fe-4S] cluster. Positions 243, 267, 311, 403, 431, 456, 491, and 493 each coordinate hybrid [4Fe-2O-2S] cluster. C403 is subject to Cysteine persulfide.

This sequence belongs to the HCP family. It depends on [4Fe-4S] cluster as a cofactor. The cofactor is hybrid [4Fe-2O-2S] cluster.

It is found in the cytoplasm. It carries out the reaction A + NH4(+) + H2O = hydroxylamine + AH2 + H(+). Catalyzes the reduction of hydroxylamine to form NH(3) and H(2)O. The chain is Hydroxylamine reductase from Desulfitobacterium hafniense (strain DSM 10664 / DCB-2).